A 399-amino-acid polypeptide reads, in one-letter code: DNA polymerase IV (399 aa).

A UmuC domain is found at 5–187 (ILHCDLNNFY…LPVEALLYVG (183 aa)). Asp9 and Asp105 together coordinate Mg(2+). Glu106 is a catalytic residue.

This sequence belongs to the DNA polymerase type-Y family. Monomer. The cofactor is Mg(2+).

It localises to the cytoplasm. It carries out the reaction DNA(n) + a 2'-deoxyribonucleoside 5'-triphosphate = DNA(n+1) + diphosphate. Poorly processive, error-prone DNA polymerase involved in untargeted mutagenesis. Copies undamaged DNA at stalled replication forks, which arise in vivo from mismatched or misaligned primer ends. These misaligned primers can be extended by PolIV. Exhibits no 3'-5' exonuclease (proofreading) activity. May be involved in translesional synthesis, in conjunction with the beta clamp from PolIII. This chain is DNA polymerase IV, found in Acetivibrio thermocellus (strain ATCC 27405 / DSM 1237 / JCM 9322 / NBRC 103400 / NCIMB 10682 / NRRL B-4536 / VPI 7372) (Clostridium thermocellum).